An 87-amino-acid polypeptide reads, in one-letter code: U14-lycotoxin-Ls1b (87 aa).

The signal sequence occupies residues 1-20; the sequence is MNSKVFAVLLLLALSTCVLS. The region spanning 21-66 is the WAP domain; that stretch reads EKYCPTPRNTSCKKMNIRNNCCRDSDCTSNAFCCAEPCGNFCHKAS. 5 cysteine pairs are disulfide-bonded: Cys-24–Cys-54, Cys-32–Cys-58, Cys-41–Cys-53, Cys-42–Cys-80, and Cys-47–Cys-62.

Belongs to the venom protein 11 family. 01 (wap-1) subfamily. Post-translationally, contains 5 disulfide bonds. In terms of tissue distribution, expressed by the venom gland.

Its subcellular location is the secreted. Its function is as follows. Has antibacterial activity. In Lycosa singoriensis (Wolf spider), this protein is U14-lycotoxin-Ls1b.